Consider the following 134-residue polypeptide: Small ribosomal subunit protein uS8c (134 aa).

The protein belongs to the universal ribosomal protein uS8 family. As to quaternary structure, part of the 30S ribosomal subunit.

The protein resides in the plastid. The protein localises to the chloroplast. In terms of biological role, one of the primary rRNA binding proteins, it binds directly to 16S rRNA central domain where it helps coordinate assembly of the platform of the 30S subunit. The protein is Small ribosomal subunit protein uS8c (rps8) of Capsella bursa-pastoris (Shepherd's purse).